The primary structure comprises 168 residues: Transcriptional repressor NrdR (168 aa).

Residues 3 to 34 (CPYCGFAQDRVVDSRESKEADSIRRRRECERC) fold into a zinc finger. The ATP-cone domain maps to 49-139 (YMVVKKDGRR…VYRDFKDVNE (91 aa)).

The protein belongs to the NrdR family. Requires Zn(2+) as cofactor.

Its function is as follows. Negatively regulates transcription of bacterial ribonucleotide reductase nrd genes and operons by binding to NrdR-boxes. This is Transcriptional repressor NrdR from Acidobacterium capsulatum (strain ATCC 51196 / DSM 11244 / BCRC 80197 / JCM 7670 / NBRC 15755 / NCIMB 13165 / 161).